A 494-amino-acid polypeptide reads, in one-letter code: MTAKCIMVLGTTSGAGKSWLTTALCRYYARQGLKVAPFKAQNMSNNARVVASDKGSGEIGSAQYFQALAARSVPDVRMNPLLLKPEADTHSQVVLMGRVSDALTAMPWRSRSNHVWPHIAAALDELRSENDVVVIEGAGSPAEINLSGSDIVNMRVARHCDAACLLVTDIDRGGAFAHLYGTWALLPERERVLIKGFVLNKFRGDAALLAPAPQMLQDLTRIATVATLPMWWQHGLPEEDGVFDDRSTASGAVKQTVAVIAYPRISNLDEFQPLKNIPGLRLMWVRSPAELAGLSASDWVILPGSKATSSDLAWLRAQGLDAAVAAHAGRGGAVLGICAGLQMLGKALIDPQGVDGDAPGLGLLPLVTVFELDKTVRHTQATFADGIAAPWHALAAVTVSGYEIHQGITQPQSTPATAGEVARAVLPGGLAWQNAAGNVLGLYLHGLFEDPGALQALFGAQLNGPVPTLDVVFDRLADFIELHFQPGVLPGLLT.

The GATase cobBQ-type domain maps to 254–453 (KQTVAVIAYP…LHGLFEDPGA (200 aa)). The active-site Nucleophile is C338. The active site involves H445.

The protein belongs to the CobB/CobQ family. CobQ subfamily.

It participates in cofactor biosynthesis; adenosylcobalamin biosynthesis. Its function is as follows. Catalyzes amidations at positions B, D, E, and G on adenosylcobyrinic A,C-diamide. NH(2) groups are provided by glutamine, and one molecule of ATP is hydrogenolyzed for each amidation. This chain is Cobyric acid synthase, found in Albidiferax ferrireducens (strain ATCC BAA-621 / DSM 15236 / T118) (Rhodoferax ferrireducens).